Reading from the N-terminus, the 186-residue chain is MTDILTNIFTILSRMSLAEGFGFNTDIFETNILNLAVVLGILLTSGREFFVSLLQNRQQNILQSINDADERYKEAAEKLQQAQNEFEQAKLEADQILAQSKKTASEIEVGLMNLIKEDTKKLLDMKQATISFEEEKAISEIRRQVIRLALQRALEQSKSRLNRRLQKRVTRLNIGLLGRLVTPNDV.

A helical transmembrane segment spans residues 27–43 (IFETNILNLAVVLGILL).

The protein belongs to the ATPase B chain family. As to quaternary structure, F-type ATPases have 2 components, F(1) - the catalytic core - and F(0) - the membrane proton channel. F(1) has five subunits: alpha(3), beta(3), gamma(1), delta(1), epsilon(1). F(0) has four main subunits: a(1), b(1), b'(1) and c(10-14). The alpha and beta chains form an alternating ring which encloses part of the gamma chain. F(1) is attached to F(0) by a central stalk formed by the gamma and epsilon chains, while a peripheral stalk is formed by the delta, b and b' chains.

The protein resides in the plastid. Its subcellular location is the chloroplast thylakoid membrane. Functionally, f(1)F(0) ATP synthase produces ATP from ADP in the presence of a proton or sodium gradient. F-type ATPases consist of two structural domains, F(1) containing the extramembraneous catalytic core and F(0) containing the membrane proton channel, linked together by a central stalk and a peripheral stalk. During catalysis, ATP synthesis in the catalytic domain of F(1) is coupled via a rotary mechanism of the central stalk subunits to proton translocation. Component of the F(0) channel, it forms part of the peripheral stalk, linking F(1) to F(0). The chain is ATP synthase subunit b, chloroplastic from Mesostigma viride (Green alga).